Here is a 209-residue protein sequence, read N- to C-terminus: Ribosome maturation factor RimP (209 aa).

Belongs to the RimP family.

The protein resides in the cytoplasm. In terms of biological role, required for maturation of 30S ribosomal subunits. The sequence is that of Ribosome maturation factor RimP from Bartonella bacilliformis (strain ATCC 35685 / KC583 / Herrer 020/F12,63).